A 132-amino-acid chain; its full sequence is Small ribosomal subunit protein uS8 (132 aa).

The protein belongs to the universal ribosomal protein uS8 family. As to quaternary structure, part of the 30S ribosomal subunit. Contacts proteins S5 and S12.

Functionally, one of the primary rRNA binding proteins, it binds directly to 16S rRNA central domain where it helps coordinate assembly of the platform of the 30S subunit. The sequence is that of Small ribosomal subunit protein uS8 from Clostridium perfringens (strain ATCC 13124 / DSM 756 / JCM 1290 / NCIMB 6125 / NCTC 8237 / Type A).